Here is a 201-residue protein sequence, read N- to C-terminus: MELVLKDAQSALEVSETTFGRDFNEALVHQVVVAYAANARQGTRAQKTRAEVTGSGKKPWRQKGTGRARAGGVKGPIWRGGGVTFAAKTQDHSQKVNKKMYRGALKSILSELVRQDRLVVVESFSVEAPKTKELKAKLKAMNLEDVLIVTAEVDENLFLAARNLYKVDVRDVAGLDPVSLIAFNTVLVTADAVKQIEEMLA.

The tract at residues 45 to 71 (AQKTRAEVTGSGKKPWRQKGTGRARAG) is disordered.

The protein belongs to the universal ribosomal protein uL4 family. As to quaternary structure, part of the 50S ribosomal subunit.

Functionally, one of the primary rRNA binding proteins, this protein initially binds near the 5'-end of the 23S rRNA. It is important during the early stages of 50S assembly. It makes multiple contacts with different domains of the 23S rRNA in the assembled 50S subunit and ribosome. Forms part of the polypeptide exit tunnel. This is Large ribosomal subunit protein uL4 from Shewanella sp. (strain MR-4).